A 204-amino-acid chain; its full sequence is Chaperone protein TorD (204 aa).

The protein belongs to the TorD/DmsD family. TorD subfamily.

It is found in the cytoplasm. In terms of biological role, involved in the biogenesis of TorA. Acts on TorA before the insertion of the molybdenum cofactor and, as a result, probably favors a conformation of the apoenzyme that is competent for acquiring the cofactor. The sequence is that of Chaperone protein TorD from Shewanella baltica (strain OS223).